The primary structure comprises 547 residues: uncharacterized protein (547 aa).

Residues 1 to 21 (MVKKHQNSKMGNTNHFGHLKS) are Extracellular-facing. A helical membrane pass occupies residues 22–42 (FVGGNVVALGAGTPYLFSFYA). The Cytoplasmic portion of the chain corresponds to 43–58 (PQLLSKCHIPVSASSK). Residues 59–79 (LSFSLTIGSSLMGILAGIVVD) traverse the membrane as a helical segment. Topologically, residues 80–83 (RSPK) are extracellular. A helical membrane pass occupies residues 84–104 (LSCLIGSMCVFIAYLILNLCY). Residues 105 to 110 (KHEWSS) lie on the Cytoplasmic side of the membrane. A helical membrane pass occupies residues 111 to 131 (TFLISLSLVLIGYGSVSGFYA). Topologically, residues 132–144 (SVKCANTNFPQHR) are extracellular. The helical transmembrane segment at 145-165 (GTAGAFPVSLYGLSGMVFSYL) threads the bilayer. Residues 166-175 (CSKLFGENIE) are Cytoplasmic-facing. A helical transmembrane segment spans residues 176–196 (HVFIFLMVACGCMILVGYFSL). At 197–323 (DIFSNAEGDD…LKSSTFIGYY (127 aa)) the chain is on the extracellular side. Ser237 carries the phosphoserine modification. Positions 275-300 (LLSPSSPHTKYDFEDENTSKNTVGEN) are disordered. A helical membrane pass occupies residues 324-344 (IVLGILQGVGLMYIYSVGFMV). Topologically, residues 345–398 (QAQVSTPPLNQLPINAEKIQSLQVTLLSLLSFCGRLSSGPISDFLVKKFKAQRL) are cytoplasmic. The helical transmembrane segment at 399–419 (WNIVIASLLVFLASNKISHDF) threads the bilayer. Over 420–437 (SSIEDPSLRASKSFKNIS) the chain is Extracellular. The helical transmembrane segment at 438-458 (VCSAIFGYSFGVLFGTFPSIV) threads the bilayer. Residues 459-469 (ADRFGTNGYST) lie on the Cytoplasmic side of the membrane. The helical transmembrane segment at 470-490 (LWGVLTTGGVFSVSVFTDILG) threads the bilayer. The Extracellular segment spans residues 491 to 514 (RDFKANTGDDDGNCKKGVLCYSYT). Residues 515-535 (FMVTKYCAAFNLLFVLGIIGY) traverse the membrane as a helical segment. Over 536–547 (TYYRRRATANSL) the chain is Cytoplasmic.

The protein localises to the membrane. This is an uncharacterized protein from Saccharomyces cerevisiae (strain ATCC 204508 / S288c) (Baker's yeast).